A 664-amino-acid polypeptide reads, in one-letter code: ATP-dependent zinc metalloprotease FtsH (664 aa).

The Cytoplasmic portion of the chain corresponds to 1 to 9 (MKQNIKRNW). Residues 10–30 (IWILIVMIVIGIILYFSIRNL) form a helical membrane-spanning segment. Topologically, residues 31–136 (FSTKVAEWSI…KSVATPQPNP (106 aa)) are extracellular. A helical membrane pass occupies residues 137–157 (FLGILISSVPVLILIFVMVWI). Residues 158 to 664 (YRSQVKMMNG…SLIEKTSKKE (507 aa)) lie on the Cytoplasmic side of the membrane. Position 229-236 (229-236 (GPPGTGKT)) interacts with ATP. Zn(2+) is bound at residue His451. Residue Glu452 is part of the active site. Zn(2+)-binding residues include His455 and Asp529. Basic and acidic residues predominate over residues 639 to 649 (IEEKDLSKNSE). The tract at residues 639–664 (IEEKDLSKNSEDNNLDSLIEKTSKKE) is disordered.

In the central section; belongs to the AAA ATPase family. This sequence in the C-terminal section; belongs to the peptidase M41 family. As to quaternary structure, homohexamer. The cofactor is Zn(2+).

It is found in the cell membrane. Acts as a processive, ATP-dependent zinc metallopeptidase for both cytoplasmic and membrane proteins. Plays a role in the quality control of integral membrane proteins. The chain is ATP-dependent zinc metalloprotease FtsH from Mycoplasmopsis synoviae (strain 53) (Mycoplasma synoviae).